A 245-amino-acid chain; its full sequence is Transmembrane and ubiquitin-like domain-containing protein 1 (245 aa).

The tract at residues 2 to 30 (ALIEGVGDEVTVLFSVLACLLVLALAWVS) is required to release iHOPS from membranes. A helical transmembrane segment spans residues 11–31 (VTVLFSVLACLLVLALAWVST). Residues 34 to 51 (TESTDPLPQSSGTTTPAQ) are compositionally biased toward polar residues. Residues 34-100 (TESTDPLPQS…ASTPPDSPQE (67 aa)) are disordered. Phosphoserine is present on residues serine 73, serine 97, and serine 126. One can recognise a Ubiquitin-like domain in the interval 102-175 (LLLRLKFLND…LHCHVSTRVG (74 aa)). 2 helical membrane-spanning segments follow: residues 194-214 (IGSLLLPLLLLLLLLLWYCQI) and 219-239 (FFPLTATLGLAGFTLLLSLLA).

As to quaternary structure, interacts with EEF1A1, GRIA2, GRIP1. Interacts with CAMLG, TUBG1. Interacts with NPM1 and CDKN2A; TMUB1 can enhance interaction between NPM1 and CDKN2A and is proposed to bridge the proteins; proposed to be mediated by iHOPS. Interacts with ERLIN2 and AMFR; TMUB1 promotes the interaction of ERLIN2 with AMFR. Post-translationally, processed by regulated intramembrane proteolysis (RIP) in the N-terminus to release iHOPS from membranes.

It is found in the membrane. Its subcellular location is the postsynaptic cell membrane. The protein resides in the recycling endosome. The protein localises to the cytoplasm. It localises to the cytoskeleton. It is found in the microtubule organizing center. Its subcellular location is the centrosome. The protein resides in the nucleus. The protein localises to the nucleolus. Involved in sterol-regulated ubiquitination and degradation of HMG-CoA reductase HMGCR. Involved in positive regulation of AMPA-selective glutamate receptor GRIA2 recycling to the cell surface. Acts as a negative regulator of hepatocyte growth during regeneration. Functionally, may contribute to the regulation of translation during cell-cycle progression. May contribute to the regulation of cell proliferation. May be involved in centrosome assembly. Modulates stabilization and nucleolar localization of tumor suppressor CDKN2A and enhances association between CDKN2A and NPM1. The sequence is that of Transmembrane and ubiquitin-like domain-containing protein 1 (Tmub1) from Rattus norvegicus (Rat).